The following is an 850-amino-acid chain: Protein argonaute 8 (850 aa).

Residues 1–30 form a disordered region; it reads MDTTLPPPQHMEREPLKSKSSLLPMTRRGN. The region spanning 247 to 361 is the PAZ domain; sequence PVVDFLIANQ…FPIELCELVS (115 aa). The region spanning 518–811 is the Piwi domain; that stretch reads QSILGEVPPK…AAAQMATAMK (294 aa).

It belongs to the argonaute family. Ago subfamily.

Involved in RNA-mediated post-transcriptional gene silencing (PTGS). Main component of the RNA-induced silencing complex (RISC) that binds to a short guide RNA such as a microRNA (miRNA) or small interfering RNA (siRNA). RISC uses the mature miRNA or siRNA as a guide for slicer-directed cleavage of homologous mRNAs to repress gene expression. The sequence is that of Protein argonaute 8 (AGO8) from Arabidopsis thaliana (Mouse-ear cress).